Reading from the N-terminus, the 309-residue chain is Tagatose-6-phosphate kinase (309 aa).

It belongs to the carbohydrate kinase PfkB family. LacC subfamily.

The catalysed reaction is D-tagatofuranose 6-phosphate + ATP = D-tagatofuranose 1,6-bisphosphate + ADP + H(+). It participates in carbohydrate metabolism; D-tagatose 6-phosphate degradation; D-glyceraldehyde 3-phosphate and glycerone phosphate from D-tagatose 6-phosphate: step 1/2. This is Tagatose-6-phosphate kinase from Streptococcus pneumoniae (strain Hungary19A-6).